The following is a 158-amino-acid chain: Antitoxin TacA (158 aa).

It belongs to the TacA antitoxin family. In terms of assembly, forms a complex with cognate toxin TacT.

In terms of biological role, antitoxin component of a type II toxin-antitoxin (TA) system. Counteracts the toxic effect of cognate toxin TacT. TacA-TacT both represses and derepresses expression of its own operon. The polypeptide is Antitoxin TacA (Mycobacterium tuberculosis (strain ATCC 25618 / H37Rv)).